Reading from the N-terminus, the 208-residue chain is Large ribosomal subunit protein uL4 (208 aa).

The segment at 49–78 (KAKGISDISGTTAKPYRQKHTGRARQGSLR) is disordered.

Belongs to the universal ribosomal protein uL4 family. Part of the 50S ribosomal subunit.

Its function is as follows. One of the primary rRNA binding proteins, this protein initially binds near the 5'-end of the 23S rRNA. It is important during the early stages of 50S assembly. It makes multiple contacts with different domains of the 23S rRNA in the assembled 50S subunit and ribosome. Forms part of the polypeptide exit tunnel. This Anaplasma phagocytophilum (strain HZ) protein is Large ribosomal subunit protein uL4.